The primary structure comprises 222 residues: Phosphoribosylformylglycinamidine synthase subunit PurQ (222 aa).

Positions 2–222 constitute a Glutamine amidotransferase type-1 domain; the sequence is SVAIVRFPGT…DNLLHIAEMK (221 aa). C86 acts as the Nucleophile in catalysis. Active-site residues include H194 and E196.

As to quaternary structure, part of the FGAM synthase complex composed of 1 PurL, 1 PurQ and 2 PurS subunits.

It localises to the cytoplasm. The catalysed reaction is N(2)-formyl-N(1)-(5-phospho-beta-D-ribosyl)glycinamide + L-glutamine + ATP + H2O = 2-formamido-N(1)-(5-O-phospho-beta-D-ribosyl)acetamidine + L-glutamate + ADP + phosphate + H(+). It carries out the reaction L-glutamine + H2O = L-glutamate + NH4(+). It functions in the pathway purine metabolism; IMP biosynthesis via de novo pathway; 5-amino-1-(5-phospho-D-ribosyl)imidazole from N(2)-formyl-N(1)-(5-phospho-D-ribosyl)glycinamide: step 1/2. Its function is as follows. Part of the phosphoribosylformylglycinamidine synthase complex involved in the purines biosynthetic pathway. Catalyzes the ATP-dependent conversion of formylglycinamide ribonucleotide (FGAR) and glutamine to yield formylglycinamidine ribonucleotide (FGAM) and glutamate. The FGAM synthase complex is composed of three subunits. PurQ produces an ammonia molecule by converting glutamine to glutamate. PurL transfers the ammonia molecule to FGAR to form FGAM in an ATP-dependent manner. PurS interacts with PurQ and PurL and is thought to assist in the transfer of the ammonia molecule from PurQ to PurL. The sequence is that of Phosphoribosylformylglycinamidine synthase subunit PurQ from Helicobacter hepaticus (strain ATCC 51449 / 3B1).